The chain runs to 418 residues: Light-independent protochlorophyllide reductase subunit N (418 aa).

The [4Fe-4S] cluster site is built by cysteine 17, cysteine 42, and cysteine 103.

Belongs to the BchN/ChlN family. In terms of assembly, protochlorophyllide reductase is composed of three subunits; ChlL, ChlN and ChlB. Forms a heterotetramer of two ChlB and two ChlN subunits. [4Fe-4S] cluster serves as cofactor.

The enzyme catalyses chlorophyllide a + oxidized 2[4Fe-4S]-[ferredoxin] + 2 ADP + 2 phosphate = protochlorophyllide a + reduced 2[4Fe-4S]-[ferredoxin] + 2 ATP + 2 H2O. It functions in the pathway porphyrin-containing compound metabolism; chlorophyll biosynthesis (light-independent). Component of the dark-operative protochlorophyllide reductase (DPOR) that uses Mg-ATP and reduced ferredoxin to reduce ring D of protochlorophyllide (Pchlide) to form chlorophyllide a (Chlide). This reaction is light-independent. The NB-protein (ChlN-ChlB) is the catalytic component of the complex. This Prochlorococcus marinus (strain MIT 9303) protein is Light-independent protochlorophyllide reductase subunit N.